Here is a 307-residue protein sequence, read N- to C-terminus: Elongation factor Ts (307 aa).

An involved in Mg(2+) ion dislocation from EF-Tu region spans residues T80–V83.

It belongs to the EF-Ts family.

The protein localises to the cytoplasm. In terms of biological role, associates with the EF-Tu.GDP complex and induces the exchange of GDP to GTP. It remains bound to the aminoacyl-tRNA.EF-Tu.GTP complex up to the GTP hydrolysis stage on the ribosome. This chain is Elongation factor Ts, found in Xanthobacter autotrophicus (strain ATCC BAA-1158 / Py2).